Here is a 247-residue protein sequence, read N- to C-terminus: Enolase-phosphatase E1 (247 aa).

Aspartate 12 and glutamate 14 together coordinate Mg(2+). Substrate-binding positions include 141 to 142 (SS) and lysine 175. Residue aspartate 200 participates in Mg(2+) binding.

The protein belongs to the HAD-like hydrolase superfamily. MasA/MtnC family. In terms of assembly, monomer. Mg(2+) serves as cofactor.

The protein localises to the cytoplasm. Its subcellular location is the nucleus. It catalyses the reaction 5-methylsulfanyl-2,3-dioxopentyl phosphate + H2O = 1,2-dihydroxy-5-(methylsulfanyl)pent-1-en-3-one + phosphate. The protein operates within amino-acid biosynthesis; L-methionine biosynthesis via salvage pathway; L-methionine from S-methyl-5-thio-alpha-D-ribose 1-phosphate: step 3/6. Its pathway is amino-acid biosynthesis; L-methionine biosynthesis via salvage pathway; L-methionine from S-methyl-5-thio-alpha-D-ribose 1-phosphate: step 4/6. In terms of biological role, bifunctional enzyme that catalyzes the enolization of 2,3-diketo-5-methylthiopentyl-1-phosphate (DK-MTP-1-P) into the intermediate 2-hydroxy-3-keto-5-methylthiopentenyl-1-phosphate (HK-MTPenyl-1-P), which is then dephosphorylated to form the acireductone 1,2-dihydroxy-3-keto-5-methylthiopentene (DHK-MTPene). This chain is Enolase-phosphatase E1, found in Drosophila willistoni (Fruit fly).